A 634-amino-acid polypeptide reads, in one-letter code: 1-deoxy-D-xylulose-5-phosphate synthase (634 aa).

Residues histidine 77 and 118–120 (GHA) each bind thiamine diphosphate. Position 149 (aspartate 149) interacts with Mg(2+). Thiamine diphosphate contacts are provided by residues 150-151 (AS), asparagine 178, tyrosine 289, and glutamate 371. Asparagine 178 is a binding site for Mg(2+).

Belongs to the transketolase family. DXPS subfamily. Homodimer. Mg(2+) serves as cofactor. The cofactor is thiamine diphosphate.

The catalysed reaction is D-glyceraldehyde 3-phosphate + pyruvate + H(+) = 1-deoxy-D-xylulose 5-phosphate + CO2. It participates in metabolic intermediate biosynthesis; 1-deoxy-D-xylulose 5-phosphate biosynthesis; 1-deoxy-D-xylulose 5-phosphate from D-glyceraldehyde 3-phosphate and pyruvate: step 1/1. Functionally, catalyzes the acyloin condensation reaction between C atoms 2 and 3 of pyruvate and glyceraldehyde 3-phosphate to yield 1-deoxy-D-xylulose-5-phosphate (DXP). In Leptospira interrogans serogroup Icterohaemorrhagiae serovar copenhageni (strain Fiocruz L1-130), this protein is 1-deoxy-D-xylulose-5-phosphate synthase.